A 184-amino-acid chain; its full sequence is Peptide deformylase 2 (184 aa).

Fe cation contacts are provided by Cys110 and His153. Residue Glu154 is part of the active site. His157 lines the Fe cation pocket.

Belongs to the polypeptide deformylase family. The cofactor is Fe(2+).

The enzyme catalyses N-terminal N-formyl-L-methionyl-[peptide] + H2O = N-terminal L-methionyl-[peptide] + formate. Removes the formyl group from the N-terminal Met of newly synthesized proteins. Requires at least a dipeptide for an efficient rate of reaction. N-terminal L-methionine is a prerequisite for activity but the enzyme has broad specificity at other positions. The sequence is that of Peptide deformylase 2 (defB) from Bacillus subtilis (strain 168).